A 353-amino-acid polypeptide reads, in one-letter code: Tsukushi (353 aa).

The signal sequence occupies residues 1–17; it reads MLCTLFLLLLALGIVQT. In terms of domain architecture, LRRNT spans 18-59; it reads TRPCFPGCQCEEETFGLFDSFSLIRVDCSSLGPHIVPVPIPL. 10 LRR repeats span residues 60 to 80, 86 to 107, 110 to 131, 133 to 154, 160 to 180, 186 to 207, 208 to 228, 231 to 253, 256 to 277, and 281 to 302; these read DTAH…SVLG, TLAG…AFSR, YLES…VFTS, PLSD…AFTT, ALHV…PARA, TIQS…RDLP, LRYL…AFMG, GLTH…GFRE, GLQV…EVFS, and LLQE…LLHH. N-linked (GlcNAc...) asparagine glycosylation occurs at asparagine 75. N-linked (GlcNAc...) asparagine glycosylation occurs at asparagine 138. N-linked (GlcNAc...) asparagine glycosylation is present at asparagine 191.

Interacts with FZD4 (via FZ domain); competes with WNT2B for binding to FZD4, inhibiting Wnt signaling and repressing peripheral eye development. Interacts with TGFB1; the interaction contributes to regulation of the hair cycle. Interacts with netrin. Interacts with CCN2. As to expression, expressed at high levels in the liver, small intestine and placenta. Not or barely detectable in other tissues, including whole pancreas, adipose tissues, skeletal muscle, kidney, spleen, brain, lung and testis.

It localises to the secreted. Contributes to various developmental events and other processes such as wound healing and cholesterol homeostasis through its interactions with multiple signaling pathways. Wnt signaling inhibitor which competes with WNT2B for binding to Wnt receptor FZD4 and represses WNT2B-dependent development of the peripheral eye. Plays a role in regulating the hair cycle by controlling TGFB1 signaling. Required for the development of the anterior commissure in the brain by inhibiting neurite outgrowth. Essential for terminal differentiation of hippocampal neural stem cells. Plays a role in regulating bone elongation and bone mass by modulating growth plate chondrocyte function and overall body size. Required for development of the inner ear through its involvement in stereocilia formation in inner hair cells. Facilitates wound healing by inhibiting secretion of TGFB1 from macrophages which prevents myofibroblast differentiation, maintaining inflammatory cell quiescence. Plays a role in cholesterol homeostasis by reducing circulating high-density lipoprotein cholesterol, lowering cholesterol efflux capacity and decreasing cholesterol-to-bile acid conversion in the liver. In one study, shown to negatively regulate sympathetic innervation in brown fat, leading to reduced energy expenditure. In another study, shown not to affect brown fat thermogenic capacity, body weight gain or glucose homeostasis. In Rattus norvegicus (Rat), this protein is Tsukushi (Tsku).